The chain runs to 342 residues: Cathepsin B-like cysteine proteinase (342 aa).

Positions 1–17 are cleaved as a signal peptide; sequence MLKIAVYIVSLFTFLEA. The propeptide at 18-89 is activation peptide; the sequence is HVTTRNNQRI…TVDHHDLNVE (72 aa). Intrachain disulfides connect Cys-103-Cys-132, Cys-115-Cys-159, Cys-151-Cys-217, Cys-152-Cys-155, Cys-188-Cys-221, and Cys-196-Cys-207. Cys-118 is a catalytic residue. Active-site residues include His-288 and Asn-308.

This sequence belongs to the peptidase C1 family. In terms of tissue distribution, intestine (gut).

In terms of biological role, thiol protease. Has a role as a digestive enzyme. This chain is Cathepsin B-like cysteine proteinase (CATB), found in Schistosoma japonicum (Blood fluke).